A 298-amino-acid chain; its full sequence is dTDP-4-dehydrorhamnose reductase (298 aa).

NADH contacts are provided by residues 10–12 (GQV), 35–36 (DL), and 59–61 (AYT). Residues 11–12 (QV), 35–36 (DL), 59–61 (AYT), and Tyr-98 each bind NADPH. 100 to 101 (TD) is a dTDP-beta-L-rhamnose binding site. Residues Tyr-124 and Lys-128 each contribute to the NADH site. NADPH contacts are provided by Tyr-124 and Lys-128. Tyr-124 acts as the Proton donor/acceptor in catalysis. DTDP-beta-L-rhamnose is bound at residue Trp-149.

It belongs to the dTDP-4-dehydrorhamnose reductase family. Homodimer. Mg(2+) serves as cofactor.

The catalysed reaction is dTDP-beta-L-rhamnose + NADP(+) = dTDP-4-dehydro-beta-L-rhamnose + NADPH + H(+). Its pathway is carbohydrate biosynthesis; dTDP-L-rhamnose biosynthesis. It functions in the pathway bacterial outer membrane biogenesis; LPS O-antigen biosynthesis. Its function is as follows. Involved in the biosynthesis of the dTDP-L-rhamnose which is an important component of lipopolysaccharide (LPS). Catalyzes the reduction of dTDP-6-deoxy-L-lyxo-4-hexulose to yield dTDP-L-rhamnose. This chain is dTDP-4-dehydrorhamnose reductase, found in Burkholderia thailandensis (strain ATCC 700388 / DSM 13276 / CCUG 48851 / CIP 106301 / E264).